The primary structure comprises 70 residues: ATP synthase subunit c (70 aa).

Helical transmembrane passes span 4–24 (IAAAIAIGLGALGAGIGNGLI) and 49–69 (GIALVEALPIIAVVIAFLAFF).

The protein belongs to the ATPase C chain family. In terms of assembly, F-type ATPases have 2 components, F(1) - the catalytic core - and F(0) - the membrane proton channel. F(1) has five subunits: alpha(3), beta(3), gamma(1), delta(1), epsilon(1). F(0) has three main subunits: a(1), b(2) and c(10-14). The alpha and beta chains form an alternating ring which encloses part of the gamma chain. F(1) is attached to F(0) by a central stalk formed by the gamma and epsilon chains, while a peripheral stalk is formed by the delta and b chains. The F(1)F(0) complex interacts with SpoIIIJ and YqjG; YqgA is found in the same complex.

Its subcellular location is the cell membrane. Functionally, f(1)F(0) ATP synthase produces ATP from ADP in the presence of a proton or sodium gradient. F-type ATPases consist of two structural domains, F(1) containing the extramembraneous catalytic core and F(0) containing the membrane proton channel, linked together by a central stalk and a peripheral stalk. During catalysis, ATP synthesis in the catalytic domain of F(1) is coupled via a rotary mechanism of the central stalk subunits to proton translocation. Its function is as follows. Key component of the F(0) channel; it plays a direct role in translocation across the membrane. A homomeric c-ring of between 10-14 subunits forms the central stalk rotor element with the F(1) delta and epsilon subunits. This Bacillus subtilis (strain 168) protein is ATP synthase subunit c.